The following is a 334-amino-acid chain: MGRRSSDTEEESRSKRKKKHRRRSSSSSSSDSRTYSRKKGGRRPRSDSRSWSRDRQLRSHSYERRRRRRSSSSSSYGSRRKRSRSRSRGRGKPYRVQRSRSKSRTRRSRSRPRPRSHSRSSERSSHRRTRSRSRDRDRRKVRDKEKREKEKDKGKDKEVHSIKRGDSGNIKAGLEHLPPAEQAKARLQLVLEAAAKADEALKAKERSEEEAKRRKEEDQATLVEQVKRVKEIEAIESDSFVQQTFRSSKDVKKAVEPSEVQHVTAASGPASAAAEPPSTGKEIDPDSIPTAIKYQDDNSLAHPNLFIEKAEAEEKWFKRLIALRQERLMGSPVA.

The segment covering Met-1–Arg-13 has biased composition (basic and acidic residues). Disordered regions lie at residues Met-1 to Pro-179, Asp-198 to Ala-220, and Arg-246 to Thr-290. The segment covering Ser-14–Ser-24 has biased composition (basic residues). The segment covering Pro-44–Tyr-62 has biased composition (basic and acidic residues). The segment covering Ser-78 to Ser-118 has biased composition (basic residues). Basic and acidic residues-rich tracts occupy residues Arg-132–Asp-166, Asp-198–Asp-218, and Ser-247–Glu-256. The stretch at Ala-180 to Glu-236 forms a coiled coil. Residues Ala-265–Ser-278 show a composition bias toward low complexity.

Interacts (via Arg/Ser-rich domain) with LUC7L3, RBM39 and RSF1. Post-translationally, phosphorylated.

The protein resides in the nucleus. It localises to the nucleus speckle. It is found in the cytoplasm. In terms of biological role, plays a role in pre-mRNA splicing. Involved in both constitutive and alternative pre-mRNA splicing. May have a role in the recognition of the 3' splice site during the second step of splicing. The chain is Serine/Arginine-related protein 53 (Rsrc1) from Mus musculus (Mouse).